Consider the following 376-residue polypeptide: Cysteine proteinase 2 (376 aa).

The N-terminal stretch at 1–18 is a signal peptide; it reads MRLLVFLILLIFVNFSFA. The propeptide at 19 to 122 is activation peptide; that stretch reads NVRPNGRRFS…EVLNVEDLQT (104 aa). Disulfide bonds link C144–C187, C178–C221, and C279–C365. Residue C147 is part of the active site. Residues H286 and N343 contribute to the active site.

Belongs to the peptidase C1 family.

It localises to the lysosome. Its function is as follows. Cysteine proteinases 1 and 2 are believed to participate in the breakdown of protein during differentiation of Dictyostelium as a response to starvation. The chain is Cysteine proteinase 2 (cprB) from Dictyostelium discoideum (Social amoeba).